Reading from the N-terminus, the 526-residue chain is MSENNGKQFINGQRVAANAPTIESINATDYQPTGYLFSQATLDEVDQAAQAAYQAFLKYQHTTQQQRADFLDEIAIQIENLGSKLQEVAAQETGLPLVRLQGETGRVTGQLRLFAELLRRGDFYGARIDTALPERKPLPRVDLRQYKIGVGPVAVFGASNFPLAFSTAGGDTVAALAAGCSVVFKAHSGHMATAELVAQAIEKAILNSGIPSGTFNMIFGSRVGANLVEHPLIQAAGFTGSLEGGMALFNLAQNRPQPIPFFAEMSSVNPVIVMPEALNARGEKVAQDTVASFNMGCGQFCTKPGLIIGIKSPAFDQFVTALIDTTRTAVPQIMLNQGTLKSYQQGIDALLNEQGFKCIASGQAPELISQAQPHLFQADQSVLLSGNPKLQHEVFGPMSIVIAVDDEATLLNGLEKLAGQLTATIIADESDLPQAKELLNLLTRKAGRVLFNGFPTGVEVSDAMVHGGPFPATSDSRGTSVGTGAIERFLRPVCYQNTSQVLLPDVLKDGNPLHITRLVNGVLTQN.

NADP(+)-binding positions include 159 to 160 (SN), 185 to 188 (KAHS), and 240 to 241 (GS). E264 functions as the Proton acceptor in the catalytic mechanism. Residue C301 is the Nucleophile of the active site. An NADP(+)-binding site is contributed by E393.

Belongs to the aldehyde dehydrogenase family.

It carries out the reaction 2,5-dioxopentanoate + NADP(+) + H2O = 2-oxoglutarate + NADPH + 2 H(+). It participates in carbohydrate acid metabolism; D-glucarate degradation. Functionally, catalyzes the NAD(P)(+)-dependent oxidation of alpha-ketoglutaric semialdehyde (alphaKGSA) to alpha-ketoglutarate in the D-glutarate degradation pathway. The protein is Alpha-ketoglutaric semialdehyde dehydrogenase of Acinetobacter baylyi (strain ATCC 33305 / BD413 / ADP1).